Reading from the N-terminus, the 276-residue chain is Rhomboid protease GlpG (276 aa).

Helical transmembrane passes span 96-116 (VTWL…IVGA), 142-162 (AFMH…WYIG), 169-189 (LGSG…GYVQ), 192-212 (FSGP…GYAW), 229-249 (LIAF…GMSM), and 250-270 (ANGA…ADTV). Catalysis depends on serine 201, which acts as the Nucleophile. The active site involves histidine 254.

This sequence belongs to the peptidase S54 family.

It localises to the cell inner membrane. The enzyme catalyses Cleaves type-1 transmembrane domains using a catalytic dyad composed of serine and histidine that are contributed by different transmembrane domains.. In terms of biological role, rhomboid-type serine protease that catalyzes intramembrane proteolysis. This Citrobacter koseri (strain ATCC BAA-895 / CDC 4225-83 / SGSC4696) protein is Rhomboid protease GlpG.